The primary structure comprises 245 residues: Large ribosomal subunit protein uL3 (245 aa).

An N5-methylglutamine modification is found at Q152. A disordered region spans residues R224–N245. Over residues A230–N245 the composition is skewed to low complexity.

It belongs to the universal ribosomal protein uL3 family. Part of the 50S ribosomal subunit. Forms a cluster with proteins L14 and L19. In terms of processing, methylated by PrmB.

One of the primary rRNA binding proteins, it binds directly near the 3'-end of the 23S rRNA, where it nucleates assembly of the 50S subunit. In Paracoccus denitrificans (strain Pd 1222), this protein is Large ribosomal subunit protein uL3.